We begin with the raw amino-acid sequence, 347 residues long: Cannabinoid receptor 2 (347 aa).

At 1 to 33 (MEGCRETEVTNGSNGGLEFNPMKEYMILSSGQQ) the chain is on the extracellular side. Asn11 carries N-linked (GlcNAc...) asparagine glycosylation. Residues 34-59 (IAVAVLCTLMGLLSALENMAVLYIIL) traverse the membrane as a helical segment. Residues 60-71 (SSRRLRRKPSYL) are Cytoplasmic-facing. The helical transmembrane segment at 72 to 92 (FISSLAGADFLASVIFACNFV) threads the bilayer. Residues 93–104 (IFHVFHGVDSNA) are Extracellular-facing. A helical transmembrane segment spans residues 105 to 129 (IFLLKIGSVTMTFTASVGSLLLTAV). The Cytoplasmic segment spans residues 130-149 (DRYLCLCYPPTYKALVTRGR). The chain crosses the membrane as a helical span at residues 150-172 (ALVALCVMWVLSALISYLPLMGW). Residues 173 to 188 (TCCPSPCSELFPLIPN) lie on the Extracellular side of the membrane. The chain crosses the membrane as a helical span at residues 189-214 (DYLLGWLLFIAILFSGIIYTYGYVLW). Topologically, residues 215–246 (KAHRHVATLAEHQDRQVPGIARMRLDVRLAKT) are cytoplasmic. The helical transmembrane segment at 247–267 (LGLVLAVLLICWFPALALMGH) threads the bilayer. Topologically, residues 268 to 279 (SLVTTLSDQVKE) are extracellular. Residues 280–301 (AFAFCSMLCLVNSMVNPIIYAL) traverse the membrane as a helical segment. Topologically, residues 302–347 (RSGEIRSAAQHCLIGWKKYLQGLGPEGKEEGPRSSVTETEADVKTT) are cytoplasmic. A disordered region spans residues 326–347 (PEGKEEGPRSSVTETEADVKTT). Phosphoserine is present on residues Ser335 and Ser336. At Thr338 the chain carries Phosphothreonine.

The protein belongs to the G-protein coupled receptor 1 family. As to expression, expressed by cells of hematopoietic origin. Expressed in skin in suprabasal layers and hair follicles, in brain by neurons and glial cells and by osteoblasts, osteocytes, osteoclasts (at protein level).

It is found in the cell membrane. The protein resides in the cell projection. The protein localises to the dendrite. Its subcellular location is the perikaryon. Heterotrimeric G protein-coupled receptor for endocannabinoid 2-arachidonoylglycerol mediating inhibition of adenylate cyclase. May function in inflammatory response, nociceptive transmission and bone homeostasis. This chain is Cannabinoid receptor 2 (Cnr2), found in Mus musculus (Mouse).